A 1311-amino-acid chain; its full sequence is Clustered mitochondria protein homolog (1311 aa).

Residues Met1–Pro18 show a composition bias toward low complexity. The segment at Met1–Asp27 is disordered. The region spanning Asp324–Gln568 is the Clu domain. Residues Ile491 to Ala525 form a TPR 1 repeat. Residues Ser606–Glu630 are compositionally biased toward basic and acidic residues. 2 disordered regions span residues Ser606 to Arg694 and Pro925 to Ile966. Positions Ser631–Glu661 are enriched in acidic residues. Over residues Pro665–Ala675 the composition is skewed to basic residues. The segment covering Lys676–Arg694 has biased composition (basic and acidic residues). TPR repeat units follow at residues Ala1034–Thr1067, Leu1076–Ile1109, and Ile1118–Val1151. Residues Leu1276–Lys1286 show a composition bias toward basic and acidic residues. The tract at residues Leu1276–Ala1311 is disordered. Residues Lys1287–Arg1301 are compositionally biased toward basic residues.

This sequence belongs to the CLU family. As to quaternary structure, may associate with the eukaryotic translation initiation factor 3 (eIF-3) complex.

Its subcellular location is the cytoplasm. Functionally, mRNA-binding protein involved in proper cytoplasmic distribution of mitochondria. The polypeptide is Clustered mitochondria protein homolog (Pyricularia oryzae (strain 70-15 / ATCC MYA-4617 / FGSC 8958) (Rice blast fungus)).